A 169-amino-acid polypeptide reads, in one-letter code: NADH-quinone oxidoreductase subunit B (169 aa).

[4Fe-4S] cluster contacts are provided by Cys-42, Cys-43, Cys-107, and Cys-136.

It belongs to the complex I 20 kDa subunit family. NDH-1 is composed of 14 different subunits. Subunits NuoB, C, D, E, F, and G constitute the peripheral sector of the complex. [4Fe-4S] cluster serves as cofactor.

The protein localises to the cell inner membrane. It catalyses the reaction a quinone + NADH + 5 H(+)(in) = a quinol + NAD(+) + 4 H(+)(out). Functionally, NDH-1 shuttles electrons from NADH, via FMN and iron-sulfur (Fe-S) centers, to quinones in the respiratory chain. The immediate electron acceptor for the enzyme in this species is believed to be ubiquinone. Couples the redox reaction to proton translocation (for every two electrons transferred, four hydrogen ions are translocated across the cytoplasmic membrane), and thus conserves the redox energy in a proton gradient. This is NADH-quinone oxidoreductase subunit B from Helicobacter hepaticus (strain ATCC 51449 / 3B1).